The sequence spans 169 residues: Ribosome maturation factor RimM (169 aa).

The region spanning 96–169 is the PRC barrel domain; sequence DGEYYWADLI…RILVDWGLDY (74 aa).

The protein belongs to the RimM family. In terms of assembly, binds ribosomal protein uS19.

The protein localises to the cytoplasm. Its function is as follows. An accessory protein needed during the final step in the assembly of 30S ribosomal subunit, possibly for assembly of the head region. Essential for efficient processing of 16S rRNA. May be needed both before and after RbfA during the maturation of 16S rRNA. It has affinity for free ribosomal 30S subunits but not for 70S ribosomes. The polypeptide is Ribosome maturation factor RimM (Chromobacterium violaceum (strain ATCC 12472 / DSM 30191 / JCM 1249 / CCUG 213 / NBRC 12614 / NCIMB 9131 / NCTC 9757 / MK)).